The primary structure comprises 104 residues: Urease subunit beta (104 aa).

It belongs to the urease beta subunit family. As to quaternary structure, heterotrimer of UreA (gamma), UreB (beta) and UreC (alpha) subunits. Three heterotrimers associate to form the active enzyme.

The protein localises to the cytoplasm. The enzyme catalyses urea + 2 H2O + H(+) = hydrogencarbonate + 2 NH4(+). It participates in nitrogen metabolism; urea degradation; CO(2) and NH(3) from urea (urease route): step 1/1. This is Urease subunit beta from Rhodococcus opacus (strain B4).